The following is a 373-amino-acid chain: Probable tRNA sulfurtransferase (373 aa).

Residues 54-158 (NKNIEELSKV…NDVAYFYHKI (105 aa)) form the THUMP domain. ATP contacts are provided by residues 176 to 177 (LF), 201 to 202 (NF), Lys-256, Gly-278, and Gln-287.

Belongs to the ThiI family.

The protein resides in the cytoplasm. It carries out the reaction [ThiI sulfur-carrier protein]-S-sulfanyl-L-cysteine + a uridine in tRNA + 2 reduced [2Fe-2S]-[ferredoxin] + ATP + H(+) = [ThiI sulfur-carrier protein]-L-cysteine + a 4-thiouridine in tRNA + 2 oxidized [2Fe-2S]-[ferredoxin] + AMP + diphosphate. It catalyses the reaction [ThiS sulfur-carrier protein]-C-terminal Gly-Gly-AMP + S-sulfanyl-L-cysteinyl-[cysteine desulfurase] + AH2 = [ThiS sulfur-carrier protein]-C-terminal-Gly-aminoethanethioate + L-cysteinyl-[cysteine desulfurase] + A + AMP + 2 H(+). It participates in cofactor biosynthesis; thiamine diphosphate biosynthesis. Catalyzes the ATP-dependent transfer of a sulfur to tRNA to produce 4-thiouridine in position 8 of tRNAs, which functions as a near-UV photosensor. Also catalyzes the transfer of sulfur to the sulfur carrier protein ThiS, forming ThiS-thiocarboxylate. This is a step in the synthesis of thiazole, in the thiamine biosynthesis pathway. The sulfur is donated as persulfide by IscS. This is Probable tRNA sulfurtransferase from Saccharolobus islandicus (strain M.14.25 / Kamchatka #1) (Sulfolobus islandicus).